The following is a 344-amino-acid chain: S-adenosylmethionine:tRNA ribosyltransferase-isomerase (344 aa).

Belongs to the QueA family. As to quaternary structure, monomer.

The protein localises to the cytoplasm. It catalyses the reaction 7-aminomethyl-7-carbaguanosine(34) in tRNA + S-adenosyl-L-methionine = epoxyqueuosine(34) in tRNA + adenine + L-methionine + 2 H(+). The protein operates within tRNA modification; tRNA-queuosine biosynthesis. Transfers and isomerizes the ribose moiety from AdoMet to the 7-aminomethyl group of 7-deazaguanine (preQ1-tRNA) to give epoxyqueuosine (oQ-tRNA). This Rhizorhabdus wittichii (strain DSM 6014 / CCUG 31198 / JCM 15750 / NBRC 105917 / EY 4224 / RW1) (Sphingomonas wittichii) protein is S-adenosylmethionine:tRNA ribosyltransferase-isomerase.